We begin with the raw amino-acid sequence, 509 residues long: Seipin-3 (509 aa).

The disordered stretch occupies residues 33 to 73 (YDCLNSSPPANLRRRRLPMDTDSSSSSSTSSLESCEKRSTV). Residues 52–63 (DTDSSSSSSTSS) are compositionally biased toward low complexity. The next 2 helical transmembrane spans lie at 238 to 258 (LFCAVYVGIMLFALLVSAFMI) and 455 to 475 (LFVWISMSLFIMELLFALVFF).

The protein belongs to the seipin family. Expressed in seeds, seedlings, leaves, stems and roots. Not detected in flowers.

Its subcellular location is the endoplasmic reticulum membrane. Functionally, involved in lipid metabolism and lipid droplet (LD) morphology, number, and size. Supports the formation of small-sized LDs and modulates triacylglycerol accumulation. Induces probably a reorganization of the endoplasmic reticulum into LD-forming domains. The protein is Seipin-3 of Arabidopsis thaliana (Mouse-ear cress).